The sequence spans 136 residues: Ribulose bisphosphate carboxylase small subunit, chloroplastic 1 (136 aa).

The transit peptide at 1–13 (NTDITSNGERVKC) directs the protein to the chloroplast.

This sequence belongs to the RuBisCO small chain family. Heterohexadecamer of 8 large and 8 small subunits.

The protein localises to the plastid. It is found in the chloroplast. Its function is as follows. RuBisCO catalyzes two reactions: the carboxylation of D-ribulose 1,5-bisphosphate, the primary event in carbon dioxide fixation, as well as the oxidative fragmentation of the pentose substrate. Both reactions occur simultaneously and in competition at the same active site. Although the small subunit is not catalytic it is essential for maximal activity. This is Ribulose bisphosphate carboxylase small subunit, chloroplastic 1 from Pisum sativum (Garden pea).